The following is a 110-amino-acid chain: Membrane-associated protein slr1513 (110 aa).

It localises to the cellular thylakoid membrane. Its subcellular location is the cell membrane. The protein is Membrane-associated protein slr1513 of Synechocystis sp. (strain ATCC 27184 / PCC 6803 / Kazusa).